The chain runs to 150 residues: Sulfur-rich protein, serovars L1/L3 (150 aa).

A disordered region spans residues 1–20 (MSTVPVVQGAGSSNSAQDIS). 2 helical membrane-spanning segments follow: residues 43 to 63 (VGLV…VSAA) and 69 to 89 (IYLA…ILSM).

Its subcellular location is the membrane. The protein is Sulfur-rich protein, serovars L1/L3 (srp) of Chlamydia trachomatis.